Consider the following 256-residue polypeptide: Type III pantothenate kinase (256 aa).

6 to 13 is an ATP binding site; the sequence is DIGNSSIV. Substrate contacts are provided by residues Y101 and 108 to 111; that span reads GADR. The Proton acceptor role is filled by D110. D130 is a K(+) binding site. T133 contacts ATP. Residue T185 coordinates substrate.

The protein belongs to the type III pantothenate kinase family. Homodimer. NH4(+) is required as a cofactor. K(+) serves as cofactor.

The protein resides in the cytoplasm. The catalysed reaction is (R)-pantothenate + ATP = (R)-4'-phosphopantothenate + ADP + H(+). It functions in the pathway cofactor biosynthesis; coenzyme A biosynthesis; CoA from (R)-pantothenate: step 1/5. Catalyzes the phosphorylation of pantothenate (Pan), the first step in CoA biosynthesis. The sequence is that of Type III pantothenate kinase from Shouchella clausii (strain KSM-K16) (Alkalihalobacillus clausii).